We begin with the raw amino-acid sequence, 710 residues long: DNA ligase (710 aa).

Residues 1–26 (MPEDAIGQQVPPEQEAAGAEPTSAAR) form a disordered region. Residues 53-57 (DAEFD), 102-103 (SL), and Glu-132 each bind NAD(+). Catalysis depends on Lys-134, which acts as the N6-AMP-lysine intermediate. Residues Arg-155, Glu-196, Lys-312, and Lys-336 each coordinate NAD(+). Zn(2+) is bound by residues Cys-430, Cys-433, Cys-449, and Cys-455. Positions 619 to 708 (EGPRPLEGMT…PDAAREVARV (90 aa)) constitute a BRCT domain.

This sequence belongs to the NAD-dependent DNA ligase family. LigA subfamily. Mg(2+) serves as cofactor. Mn(2+) is required as a cofactor.

The enzyme catalyses NAD(+) + (deoxyribonucleotide)n-3'-hydroxyl + 5'-phospho-(deoxyribonucleotide)m = (deoxyribonucleotide)n+m + AMP + beta-nicotinamide D-nucleotide.. DNA ligase that catalyzes the formation of phosphodiester linkages between 5'-phosphoryl and 3'-hydroxyl groups in double-stranded DNA using NAD as a coenzyme and as the energy source for the reaction. It is essential for DNA replication and repair of damaged DNA. This Salinispora arenicola (strain CNS-205) protein is DNA ligase.